The primary structure comprises 246 residues: Mitochondrial inner membrane protease ATP23 homolog (246 aa).

His-125 contacts a divalent metal cation. The active site involves Glu-126. His-129 contributes to the a divalent metal cation binding site.

It belongs to the peptidase M76 family. Interacts with XRCC6.

This is Mitochondrial inner membrane protease ATP23 homolog from Homo sapiens (Human).